The sequence spans 547 residues: Chaperonin GroEL (547 aa).

ATP-binding positions include 30–33 (TLGP), Lys-51, 87–91 (DGTTT), Gly-415, and Asp-495.

This sequence belongs to the chaperonin (HSP60) family. Forms a cylinder of 14 subunits composed of two heptameric rings stacked back-to-back. Interacts with the co-chaperonin GroES.

Its subcellular location is the cytoplasm. It carries out the reaction ATP + H2O + a folded polypeptide = ADP + phosphate + an unfolded polypeptide.. In terms of biological role, together with its co-chaperonin GroES, plays an essential role in assisting protein folding. The GroEL-GroES system forms a nano-cage that allows encapsulation of the non-native substrate proteins and provides a physical environment optimized to promote and accelerate protein folding. The chain is Chaperonin GroEL from Bartonella quintana (strain Toulouse) (Rochalimaea quintana).